We begin with the raw amino-acid sequence, 132 residues long: uncharacterized protein (132 aa).

Residues 17 to 75 form a disordered region; the sequence is RSAVPRWPHLSSQSGVEPPDRWTGTPGWPSRDQEAPGSMMPPAAAQPSAHGALVPPATA. Residues 51–65 show a composition bias toward low complexity; sequence APGSMMPPAAAQPSA.

As to expression, expressed exclusively in heart.

The protein resides in the cytoplasm. This is an uncharacterized protein from Homo sapiens (Human).